We begin with the raw amino-acid sequence, 228 residues long: L-ornithine N5-acetyltransferase NATA1 (228 aa).

Positions 1–21 (MAPPTAAPEPNTVPETSPTGH) are disordered. Residues 77–227 (VFLLEISPSP…DALQAIDKLN (151 aa)) form the N-acetyltransferase domain. Residues 153–155 (IFM), 161–166 (RKGFGK), 192–195 (NVNA), and tyrosine 199 each bind acetyl-CoA.

Belongs to the acetyltransferase family.

Acetyltransferase that converts ornithine to N5-acetylornithine, which is likely used in plant defense. This chain is L-ornithine N5-acetyltransferase NATA1 (NATA1), found in Arabidopsis thaliana (Mouse-ear cress).